The primary structure comprises 304 residues: uncharacterized protein (304 aa).

Transmembrane regions (helical) follow at residues 9-29, 67-87, 100-120, 131-151, 159-179, 189-209, 222-242, 252-272, and 278-298; these read VFYV…SIHF, IILY…GNMF, AGSI…GIFF, EFYI…INSS, FFLG…QNLI, AVVI…CLAF, IGML…GMLM, ITVF…IGYL, and INIY…LALK. 2 EamA domains span residues 13 to 148 and 171 to 298; these read LLMG…IFVI and FIQS…LALK.

Belongs to the EamA transporter family.

The protein localises to the cell membrane. This is an uncharacterized protein from Haemophilus influenzae (strain ATCC 51907 / DSM 11121 / KW20 / Rd).